The sequence spans 183 residues: MKTLIVSTVLAFITFSAQAAAFQVTSNEIKTGEQLTTSHVFSGFGCEGGNTSPSLTWSGVPEGTKSFAVTVYDPDAPTGSGWWHWTVVNIPATVTYLPVDAGRRDGTKLPTGAVQGRNDFGYAGFGGACPPKGDKPHHYQFKVWALKTEKIPVDSNSSGALVGYMLNANKIATAEITPVYEIK.

A signal peptide spans 1 to 21; sequence MKTLIVSTVLAFITFSAQAAA. A disulfide bridge connects residues Cys-46 and Cys-129.

The protein belongs to the UPF0098 family. As to quaternary structure, homodimer.

The protein resides in the periplasm. The chain is UPF0098 protein YbcL (ybcL) from Escherichia coli (strain K12).